The chain runs to 115 residues: Ribonuclease P protein component (115 aa).

Belongs to the RnpA family. In terms of assembly, consists of a catalytic RNA component (M1 or rnpB) and a protein subunit.

It catalyses the reaction Endonucleolytic cleavage of RNA, removing 5'-extranucleotides from tRNA precursor.. In terms of biological role, RNaseP catalyzes the removal of the 5'-leader sequence from pre-tRNA to produce the mature 5'-terminus. It can also cleave other RNA substrates such as 4.5S RNA. The protein component plays an auxiliary but essential role in vivo by binding to the 5'-leader sequence and broadening the substrate specificity of the ribozyme. In Bacillus cereus (strain B4264), this protein is Ribonuclease P protein component.